The sequence spans 228 residues: Methyltransferase verB (228 aa).

It belongs to the methyltransferase superfamily.

It functions in the pathway secondary metabolite biosynthesis; terpenoid biosynthesis. It participates in mycotoxin biosynthesis. Its function is as follows. Methyltransferase; part of the gene cluster that mediates the biosynthesis of the neurotoxin verrucosidin, a methylated alpha-pyrone polyketide that inhibits oxidative phosphorylation in mitochondria and thereby causes neurological diseases. The carbon backbone of verrucosidin is synthesized by the HR-PKS verA, and further modified by the other verrucodidin cluster enzymes. The sequence is that of Methyltransferase verB from Penicillium polonicum.